The following is a 491-amino-acid chain: NADH-quinone oxidoreductase subunit N 1 (491 aa).

The next 14 membrane-spanning stretches (helical) occupy residues 9 to 29 (IAAPLLALAAGALLILLLDLL), 38 to 58 (PMYVAAVGAVLVAGWYLVPLW), 76 to 96 (FAAVYGLVLLGAALLAILLSF), 104 to 124 (SGYLALLLWAAMGMVLLGGAG), 126 to 146 (LMVIFLGIELLSLALYVMIAF), 161 to 181 (FVLGSVAAAFLIFGFALIYGA), 211 to 231 (VGVGLAIVGLAFKMALVPFHI), 246 to 266 (AFMAIGTKAAAFAAMARLLVA), 276 to 296 (FLLPLSILAFASMMLGATVGI), 304 to 324 (LMAYSGIANAGYLIMAIPGLG), 329 to 349 (SAAAYYLAAYGFATMGVFAVV), 375 to 395 (VGVCLAVLFFGLIGVPPTGGF), 410 to 432 (AWIVLTGLILSTGISAYVYLKVI), and 461 to 481 (VVLAIATAGTLVLGVLPGPVS).

Belongs to the complex I subunit 2 family. NDH-1 is composed of 14 different subunits. Subunits NuoA, H, J, K, L, M, N constitute the membrane sector of the complex.

It is found in the cell membrane. It catalyses the reaction a quinone + NADH + 5 H(+)(in) = a quinol + NAD(+) + 4 H(+)(out). NDH-1 shuttles electrons from NADH, via FMN and iron-sulfur (Fe-S) centers, to quinones in the respiratory chain. The immediate electron acceptor for the enzyme in this species is believed to be a menaquinone. Couples the redox reaction to proton translocation (for every two electrons transferred, four hydrogen ions are translocated across the cytoplasmic membrane), and thus conserves the redox energy in a proton gradient. The sequence is that of NADH-quinone oxidoreductase subunit N 1 from Symbiobacterium thermophilum (strain DSM 24528 / JCM 14929 / IAM 14863 / T).